Consider the following 522-residue polypeptide: Peptide chain release factor 3 (522 aa).

Residues 10-277 form the tr-type G domain; the sequence is ASRKTFAIIS…TFVDFAPSPS (268 aa). Residues 19–26, 87–91, and 141–144 each bind GTP; these read SHPDAGKT, DTPGH, and NKMD.

The protein belongs to the TRAFAC class translation factor GTPase superfamily. Classic translation factor GTPase family. PrfC subfamily.

It is found in the cytoplasm. In terms of biological role, increases the formation of ribosomal termination complexes and stimulates activities of RF-1 and RF-2. It binds guanine nucleotides and has strong preference for UGA stop codons. It may interact directly with the ribosome. The stimulation of RF-1 and RF-2 is significantly reduced by GTP and GDP, but not by GMP. The chain is Peptide chain release factor 3 from Listeria innocua serovar 6a (strain ATCC BAA-680 / CLIP 11262).